The primary structure comprises 141 residues: ATP synthase epsilon chain (141 aa).

The protein belongs to the ATPase epsilon chain family. F-type ATPases have 2 components, CF(1) - the catalytic core - and CF(0) - the membrane proton channel. CF(1) has five subunits: alpha(3), beta(3), gamma(1), delta(1), epsilon(1). CF(0) has three main subunits: a, b and c.

Its subcellular location is the cell inner membrane. Functionally, produces ATP from ADP in the presence of a proton gradient across the membrane. The chain is ATP synthase epsilon chain from Dechloromonas aromatica (strain RCB).